A 310-amino-acid polypeptide reads, in one-letter code: Olfactory receptor 9Q1 (310 aa).

The Extracellular segment spans residues 1 to 25; the sequence is MAEMNLTLVTEFLLIAFTEYPEWAL. The N-linked (GlcNAc...) asparagine glycan is linked to Asn-5. The helical transmembrane segment at 26–46 threads the bilayer; sequence PLFLLFLFMYLITVLGNLEMI. Residues 47–54 lie on the Cytoplasmic side of the membrane; the sequence is ILILMDHQ. Residues 55 to 75 traverse the membrane as a helical segment; sequence LHAPMYFLLSHLAFMDVCYSS. Residues 76–99 lie on the Extracellular side of the membrane; the sequence is ITVPQMLAVLLEHGAALSYTRCAA. Cys-97 and Cys-189 are oxidised to a cystine. A helical transmembrane segment spans residues 100–120; the sequence is QFFLFTFFGSIDCYLLALMAY. The Cytoplasmic segment spans residues 121–139; sequence DRYLAVCQPLLYVTILTQQ. The chain crosses the membrane as a helical span at residues 140–160; sequence ARLSLVAGAYVAGLISALVRT. The Extracellular portion of the chain corresponds to 161-197; the sequence is VSAFTLSFCGTSEIDFIFCDLPPLLKLTCGESYTQEV. A helical transmembrane segment spans residues 198–217; sequence LIIMFAIFVIPASMVVILVS. At 218–236 the chain is on the cytoplasmic side; it reads YLFIIVAIMGIPAGSQAKT. A helical membrane pass occupies residues 237–257; it reads FSTCTSHLTAVSLFFGTLIFM. Residues 258–270 are Extracellular-facing; it reads YLRGNSDQSSEKN. Residues 271–291 form a helical membrane-spanning segment; that stretch reads RVVSVLYTEVIPMLNPLIYSL. The Cytoplasmic segment spans residues 292 to 310; it reads RNKEVKEALRKILNRAKLS.

The protein belongs to the G-protein coupled receptor 1 family.

It localises to the cell membrane. Functionally, odorant receptor. This is Olfactory receptor 9Q1 (OR9Q1) from Homo sapiens (Human).